The chain runs to 1057 residues: Carbamoyl phosphate synthase large chain (1057 aa).

Residues 1-401 are carboxyphosphate synthetic domain; the sequence is MPKRNDIKTI…SLLKAIRSLE (401 aa). 12 residues coordinate ATP: R129, R169, G175, G176, K208, I210, E215, G241, I242, H243, Q284, and E298. The 195-residue stretch at 133 to 327 folds into the ATP-grasp 1 domain; that stretch reads RTLMNYLNVP…IAKLAAKIAV (195 aa). 3 residues coordinate Mg(2+): Q284, E298, and N300. Residues Q284, E298, and N300 each coordinate Mn(2+). Positions 402-546 are oligomerization domain; it reads YGVHHLGLPN…YGTYETENES (145 aa). Positions 547–929 are carbamoyl phosphate synthetic domain; the sequence is IITDKEKILV…ALFKGLTGSG (383 aa). The region spanning 671–861 is the ATP-grasp 2 domain; sequence EALLRKINVP…MAQLAMRAII (191 aa). ATP-binding residues include R707, R746, L748, E752, G777, V778, H779, S780, Q820, and E832. Mg(2+)-binding residues include Q820, E832, and N834. Q820, E832, and N834 together coordinate Mn(2+). Residues 930–1057 enclose the MGS-like domain; the sequence is VEVKDHGTVL…ESMTFTMRQM (128 aa). Residues 930-1057 are allosteric domain; it reads VEVKDHGTVL…ESMTFTMRQM (128 aa).

Belongs to the CarB family. In terms of assembly, composed of two chains; the small (or glutamine) chain promotes the hydrolysis of glutamine to ammonia, which is used by the large (or ammonia) chain to synthesize carbamoyl phosphate. Tetramer of heterodimers (alpha,beta)4. It depends on Mg(2+) as a cofactor. Requires Mn(2+) as cofactor.

It carries out the reaction hydrogencarbonate + L-glutamine + 2 ATP + H2O = carbamoyl phosphate + L-glutamate + 2 ADP + phosphate + 2 H(+). The catalysed reaction is hydrogencarbonate + NH4(+) + 2 ATP = carbamoyl phosphate + 2 ADP + phosphate + 2 H(+). It functions in the pathway amino-acid biosynthesis; L-arginine biosynthesis; carbamoyl phosphate from bicarbonate: step 1/1. It participates in pyrimidine metabolism; UMP biosynthesis via de novo pathway; (S)-dihydroorotate from bicarbonate: step 1/3. Functionally, large subunit of the glutamine-dependent carbamoyl phosphate synthetase (CPSase). CPSase catalyzes the formation of carbamoyl phosphate from the ammonia moiety of glutamine, carbonate, and phosphate donated by ATP, constituting the first step of 2 biosynthetic pathways, one leading to arginine and/or urea and the other to pyrimidine nucleotides. The large subunit (synthetase) binds the substrates ammonia (free or transferred from glutamine from the small subunit), hydrogencarbonate and ATP and carries out an ATP-coupled ligase reaction, activating hydrogencarbonate by forming carboxy phosphate which reacts with ammonia to form carbamoyl phosphate. This chain is Carbamoyl phosphate synthase large chain, found in Staphylococcus aureus (strain bovine RF122 / ET3-1).